The chain runs to 39 residues: Cytochrome b559 subunit beta (39 aa).

The chain crosses the membrane as a helical span at residues 14–30 (WLAVHGLAVPTVFFLGS). His18 is a binding site for heme.

The protein belongs to the PsbE/PsbF family. Heterodimer of an alpha subunit and a beta subunit. PSII is composed of 1 copy each of membrane proteins PsbA, PsbB, PsbC, PsbD, PsbE, PsbF, PsbH, PsbI, PsbJ, PsbK, PsbL, PsbM, PsbT, PsbX, PsbY, PsbZ, Psb30/Ycf12, at least 3 peripheral proteins of the oxygen-evolving complex and a large number of cofactors. It forms dimeric complexes. It depends on heme b as a cofactor.

The protein localises to the plastid membrane. In terms of biological role, this b-type cytochrome is tightly associated with the reaction center of photosystem II (PSII). PSII is a light-driven water:plastoquinone oxidoreductase that uses light energy to abstract electrons from H(2)O, generating O(2) and a proton gradient subsequently used for ATP formation. It consists of a core antenna complex that captures photons, and an electron transfer chain that converts photonic excitation into a charge separation. The sequence is that of Cytochrome b559 subunit beta from Cuscuta europaea (European dodder).